Here is a 220-residue protein sequence, read N- to C-terminus: Protein-L-isoaspartate O-methyltransferase (220 aa).

S68 is an active-site residue.

It belongs to the methyltransferase superfamily. L-isoaspartyl/D-aspartyl protein methyltransferase family.

The protein localises to the cytoplasm. It carries out the reaction [protein]-L-isoaspartate + S-adenosyl-L-methionine = [protein]-L-isoaspartate alpha-methyl ester + S-adenosyl-L-homocysteine. Its function is as follows. Catalyzes the methyl esterification of L-isoaspartyl residues in peptides and proteins that result from spontaneous decomposition of normal L-aspartyl and L-asparaginyl residues. It plays a role in the repair and/or degradation of damaged proteins. The protein is Protein-L-isoaspartate O-methyltransferase of Dictyoglomus turgidum (strain DSM 6724 / Z-1310).